We begin with the raw amino-acid sequence, 617 residues long: BTB/POZ domain-containing protein At3g08570 (617 aa).

The BTB domain occupies glycine 36–isoleucine 106. The region spanning glutamate 210–arginine 490 is the NPH3 domain. Tyrosine 431 is modified (phosphotyrosine). 2 disordered regions span residues leucine 505–tyrosine 525 and glycine 585–phenylalanine 617. A compositionally biased stretch (basic and acidic residues) spans serine 602–phenylalanine 617.

Belongs to the NPH3 family.

It functions in the pathway protein modification; protein ubiquitination. May act as a substrate-specific adapter of an E3 ubiquitin-protein ligase complex (CUL3-RBX1-BTB) which mediates the ubiquitination and subsequent proteasomal degradation of target proteins. The sequence is that of BTB/POZ domain-containing protein At3g08570 from Arabidopsis thaliana (Mouse-ear cress).